Consider the following 225-residue polypeptide: Sugar fermentation stimulation protein homolog (225 aa).

This sequence belongs to the SfsA family.

This Sulfolobus acidocaldarius (strain ATCC 33909 / DSM 639 / JCM 8929 / NBRC 15157 / NCIMB 11770) protein is Sugar fermentation stimulation protein homolog.